Consider the following 90-residue polypeptide: DNA/RNA-binding protein Alba (90 aa).

Residue Lys8 is modified to N6-acetyllysine.

The protein belongs to the histone-like Alba family. Acetylated. Acetylation at Lys-8 decreases DNA-binding affinity.

It localises to the cytoplasm. Its subcellular location is the chromosome. Binds double-stranded DNA tightly but without sequence specificity. Involved in DNA compaction. This Nanoarchaeum equitans (strain Kin4-M) protein is DNA/RNA-binding protein Alba.